We begin with the raw amino-acid sequence, 91 residues long: Small ribosomal subunit protein uS19 (91 aa).

It belongs to the universal ribosomal protein uS19 family.

Protein S19 forms a complex with S13 that binds strongly to the 16S ribosomal RNA. This is Small ribosomal subunit protein uS19 from Lactiplantibacillus plantarum (strain ATCC BAA-793 / NCIMB 8826 / WCFS1) (Lactobacillus plantarum).